A 273-amino-acid polypeptide reads, in one-letter code: Probable NAD(P)H dehydrogenase (quinone) FQR1-like 2 (273 aa).

Positions 1 to 60 (MGKGGGCVPSKKKKPATTGDGPGIDDDNDATNAPIQIDDDQTTIDGDRTTATNTGGTTTP) are disordered. Over residues 49 to 60 (TTATNTGGTTTP) the composition is skewed to low complexity. The Flavodoxin-like domain occupies 75–263 (IFVVFYSMYG…ALAEHQGNYM (189 aa)). Residues 81–85 (SMYGH), 183–236 (FFVS…SPYG), and histidine 207 each bind FMN. Tyrosine 83 contacts NAD(+).

The protein belongs to the WrbA family. It depends on FMN as a cofactor.

It is found in the cell membrane. It carries out the reaction a quinone + NADH + H(+) = a quinol + NAD(+). It catalyses the reaction a quinone + NADPH + H(+) = a quinol + NADP(+). In terms of biological role, catalyzes the transfer of electrons from NADH and NADPH to reduce quinone to the hydroquinone state. This chain is Probable NAD(P)H dehydrogenase (quinone) FQR1-like 2, found in Arabidopsis thaliana (Mouse-ear cress).